An 88-amino-acid chain; its full sequence is Small ribosomal subunit protein bS20 (88 aa).

This sequence belongs to the bacterial ribosomal protein bS20 family.

Functionally, binds directly to 16S ribosomal RNA. This chain is Small ribosomal subunit protein bS20, found in Nitrobacter winogradskyi (strain ATCC 25391 / DSM 10237 / CIP 104748 / NCIMB 11846 / Nb-255).